A 297-amino-acid chain; its full sequence is Tumor necrosis factor receptor superfamily member 27 (297 aa).

Residues 1–138 are Extracellular-facing; sequence MDCQENEYWD…TPTVPPQEAT (138 aa). TNFR-Cys repeat units follow at residues 2–41, 43–83, and 85–118; these read DCQENEYWDQWGRCVTCQRCGPGQELSKDCGYGEGGDAYC, ACPP…NAVC, and DCLPRFYRKTRIGGLQDQECIPCTKQTPTSEVQC. Intrachain disulfides connect cysteine 3–cysteine 15, cysteine 18–cysteine 31, cysteine 21–cysteine 41, cysteine 44–cysteine 58, cysteine 61–cysteine 75, cysteine 64–cysteine 83, cysteine 86–cysteine 104, and cysteine 107–cysteine 118. Asparagine 74 carries N-linked (GlcNAc...) asparagine glycosylation. A helical; Signal-anchor for type III membrane protein transmembrane segment spans residues 139-159; sequence LVALVSSLLVVFTLAFLGLFF. Over 160–297 the chain is Cytoplasmic; sequence LYCKQFFNRH…LNVPFEVPSP (138 aa). The segment covering 272–281 has biased composition (polar residues); sequence ETLGGNTVES. Positions 272–297 are disordered; it reads ETLGGNTVESTGDRLELNVPFEVPSP.

In terms of assembly, associates with TRAF1, TRAF3 and TRAF6.

The protein resides in the membrane. Its function is as follows. Receptor for EDA isoform A2, but not for EDA isoform A1. Mediates the activation of the NF-kappa-B and JNK pathways. Activation seems to be mediated by binding to TRAF3 and TRAF6. This chain is Tumor necrosis factor receptor superfamily member 27 (EDA2R), found in Homo sapiens (Human).